Consider the following 476-residue polypeptide: Bifunctional protein HldE (476 aa).

A ribokinase region spans residues 1-319 (MKVTLPAFEK…EALKSHQGES (319 aa)). 195 to 198 (NMSE) contacts ATP. Residue Asp264 is part of the active site. A cytidylyltransferase region spans residues 345 to 476 (MTNGCFDILH…AIIQNIMSRH (132 aa)).

In the N-terminal section; belongs to the carbohydrate kinase PfkB family. The protein in the C-terminal section; belongs to the cytidylyltransferase family. In terms of assembly, homodimer.

The enzyme catalyses D-glycero-beta-D-manno-heptose 7-phosphate + ATP = D-glycero-beta-D-manno-heptose 1,7-bisphosphate + ADP + H(+). It catalyses the reaction D-glycero-beta-D-manno-heptose 1-phosphate + ATP + H(+) = ADP-D-glycero-beta-D-manno-heptose + diphosphate. Its pathway is nucleotide-sugar biosynthesis; ADP-L-glycero-beta-D-manno-heptose biosynthesis; ADP-L-glycero-beta-D-manno-heptose from D-glycero-beta-D-manno-heptose 7-phosphate: step 1/4. The protein operates within nucleotide-sugar biosynthesis; ADP-L-glycero-beta-D-manno-heptose biosynthesis; ADP-L-glycero-beta-D-manno-heptose from D-glycero-beta-D-manno-heptose 7-phosphate: step 3/4. Its function is as follows. Catalyzes the phosphorylation of D-glycero-D-manno-heptose 7-phosphate at the C-1 position to selectively form D-glycero-beta-D-manno-heptose-1,7-bisphosphate. In terms of biological role, catalyzes the ADP transfer from ATP to D-glycero-beta-D-manno-heptose 1-phosphate, yielding ADP-D-glycero-beta-D-manno-heptose. The sequence is that of Bifunctional protein HldE from Shewanella amazonensis (strain ATCC BAA-1098 / SB2B).